A 407-amino-acid chain; its full sequence is MKFVDEVSIRVKAGDGGNGCMSFRREKFIENGGPNGGDGGDGGSVYMVADENLNTLVDYRYTRHHEAQRGSNGGSTDCTGKKGDDLFLRVPVGTTVIDASTQEVIGDLITPGQKLMVAQGGWHGLGNTRFKSSTNRAPRQTTPGKPGDQRDLKMEMKVLADVGLLGLPNAGKSTFIRSVSAAKPKVADYPFTTLVPNLGVVSVDRWKSFVIADIPGLIEGASEGAGLGIRFLKHLARTRVLLHLVDLAPLDGSSPADAAEIIINELAQFSPALVDRERWLVLNKADMIMDDEKDERVKEVVERLNWEGPVYVISAIAKQGTEKLSHDLMRYLEDRADRLANDPAYAEELAELDQRIEDEARAQLQALDDARTLRRTGVKSVHDIGDDDDWDDFEDDEDGPEIIYVRD.

An Obg domain is found at 1–159; it reads MKFVDEVSIR…RDLKMEMKVL (159 aa). The tract at residues 127–150 is disordered; the sequence is NTRFKSSTNRAPRQTTPGKPGDQR. Over residues 129-143 the composition is skewed to polar residues; sequence RFKSSTNRAPRQTTP. Residues 160 to 333 form the OBG-type G domain; sequence ADVGLLGLPN…LSHDLMRYLE (174 aa). Residues 166 to 173, 191 to 195, 213 to 216, 283 to 286, and 314 to 316 each bind GTP; these read GLPNAGKS, FTTLV, DIPG, NKAD, and SAI. Residues Ser-173 and Thr-193 each contribute to the Mg(2+) site. The interval 378–407 is disordered; the sequence is VKSVHDIGDDDDWDDFEDDEDGPEIIYVRD. A compositionally biased stretch (acidic residues) spans 385–400; sequence GDDDDWDDFEDDEDGP.

Belongs to the TRAFAC class OBG-HflX-like GTPase superfamily. OBG GTPase family. In terms of assembly, monomer. Requires Mg(2+) as cofactor.

It localises to the cytoplasm. An essential GTPase which binds GTP, GDP and possibly (p)ppGpp with moderate affinity, with high nucleotide exchange rates and a fairly low GTP hydrolysis rate. Plays a role in control of the cell cycle, stress response, ribosome biogenesis and in those bacteria that undergo differentiation, in morphogenesis control. This Pseudomonas entomophila (strain L48) protein is GTPase Obg.